Reading from the N-terminus, the 347-residue chain is S-adenosylmethionine:tRNA ribosyltransferase-isomerase (347 aa).

The protein belongs to the QueA family. In terms of assembly, monomer.

The protein resides in the cytoplasm. It catalyses the reaction 7-aminomethyl-7-carbaguanosine(34) in tRNA + S-adenosyl-L-methionine = epoxyqueuosine(34) in tRNA + adenine + L-methionine + 2 H(+). It functions in the pathway tRNA modification; tRNA-queuosine biosynthesis. Its function is as follows. Transfers and isomerizes the ribose moiety from AdoMet to the 7-aminomethyl group of 7-deazaguanine (preQ1-tRNA) to give epoxyqueuosine (oQ-tRNA). This Ectopseudomonas mendocina (strain ymp) (Pseudomonas mendocina) protein is S-adenosylmethionine:tRNA ribosyltransferase-isomerase.